Consider the following 599-residue polypeptide: Translation initiation factor IF-2 (599 aa).

The region spanning 111–278 (PRPPIITVMG…SILLLAEILE (168 aa)) is the tr-type G domain. Residues 120–127 (GHVDHGKT) are G1. 120 to 127 (GHVDHGKT) is a GTP binding site. The interval 145-149 (GITQH) is G2. Positions 166–169 (DTPG) are G3. Residues 166 to 170 (DTPGH) and 220 to 223 (NKMD) each bind GTP. The G4 stretch occupies residues 220 to 223 (NKMD). Residues 256 to 258 (SAL) form a G5 region.

This sequence belongs to the TRAFAC class translation factor GTPase superfamily. Classic translation factor GTPase family. IF-2 subfamily.

It is found in the cytoplasm. One of the essential components for the initiation of protein synthesis. Protects formylmethionyl-tRNA from spontaneous hydrolysis and promotes its binding to the 30S ribosomal subunits. Also involved in the hydrolysis of GTP during the formation of the 70S ribosomal complex. In Mesomycoplasma hyopneumoniae (strain 232) (Mycoplasma hyopneumoniae), this protein is Translation initiation factor IF-2.